Here is a 200-residue protein sequence, read N- to C-terminus: Prostamide/prostaglandin F synthase (200 aa).

Belongs to the peroxiredoxin-like PRXL2 family. Prostamide/prostaglandin F synthase subfamily.

It localises to the cytoplasm. Its subcellular location is the cytosol. The catalysed reaction is prostaglandin H2 + [thioredoxin]-dithiol = prostaglandin F2alpha + [thioredoxin]-disulfide. The enzyme catalyses prostamide F2alpha + [thioredoxin]-disulfide = prostamide H2 + [thioredoxin]-dithiol. Functionally, catalyzes the reduction of prostaglandin-ethanolamide H(2) (prostamide H(2)) to prostamide F(2alpha) with NADPH as proton donor. Also able to reduce prostaglandin H(2) to prostaglandin F(2alpha). This is Prostamide/prostaglandin F synthase (prxl2b) from Salmo salar (Atlantic salmon).